A 289-amino-acid chain; its full sequence is DegV domain-containing protein YteA (289 aa).

Residues 3–284 enclose the DegV domain; that stretch reads FQIMTDSTAD…DGTIAIFSIS (282 aa). Threonine 62 and serine 94 together coordinate hexadecanoate.

In terms of biological role, may bind long-chain fatty acids, such as palmitate, and may play a role in lipid transport or fatty acid metabolism. In Lactococcus lactis subsp. lactis (strain IL1403) (Streptococcus lactis), this protein is DegV domain-containing protein YteA (yteA).